Here is a 238-residue protein sequence, read N- to C-terminus: MPHNQQIKKTVVVFSGGQDSTTCLIQALTQYDQVYCITFDYGQRHRAEICIARRLTITLGAYDHQIIDTSALNVLAASSLTRENIIVPLAEKNHMNSSLSTFVPGRNIVFLTLAAIYAYQVKAEVIITGVCETDFSGYPDCREKFIQALNKAVNLGMAYNIHFISPLMWLNKAETWALADYYQKLDLVCNETLTCYNGIQGKGCGFCTSCSLRARGLETYKQQPKLTMSSLKAKTGLP.

Residue 14–24 (FSGGQDSTTCL) participates in ATP binding. Zn(2+)-binding residues include cysteine 195, cysteine 204, cysteine 207, and cysteine 210.

The protein belongs to the QueC family. Zn(2+) serves as cofactor.

The enzyme catalyses 7-carboxy-7-deazaguanine + NH4(+) + ATP = 7-cyano-7-deazaguanine + ADP + phosphate + H2O + H(+). It functions in the pathway purine metabolism; 7-cyano-7-deazaguanine biosynthesis. In terms of biological role, catalyzes the ATP-dependent conversion of 7-carboxy-7-deazaguanine (CDG) to 7-cyano-7-deazaguanine (preQ(0)). This Baumannia cicadellinicola subsp. Homalodisca coagulata protein is 7-cyano-7-deazaguanine synthase.